The chain runs to 487 residues: NADH-quinone oxidoreductase subunit N (487 aa).

13 helical membrane passes run 9–29 (PVLPEIFMAVAGLALLMLGVF), 38–58 (VSVLVILALGAAMVLVSSLGG), 73–93 (FAGFAKGLVLVASAIATAMSL), 108–128 (VLVLFATLGMMMMISANDFIA), 161–181 (FVLGSLASGLLLYGISLLYGF), 208–228 (IIAGLVFVLAGLSFKVSAVPF), 240–260 (PTPVTSFFAVAPKIAALCLLV), 277–297 (VVTFIAIGSMFVGSFAAVVQT), 306–326 (SSIGHVGFVLVGIAAGSTLGI), 328–348 (GVLIYLAIYLFMNVGAFAVIL), 374–394 (AFVMAVLMFSMAGVPPLAGFW), 408–430 (LYTLSILGVLSSVVSTYYYLRIV), and 452–472 (LVMAVSTIVILAFTLIPAPLV).

It belongs to the complex I subunit 2 family. As to quaternary structure, NDH-1 is composed of 14 different subunits. Subunits NuoA, H, J, K, L, M, N constitute the membrane sector of the complex.

It localises to the cell inner membrane. It catalyses the reaction a quinone + NADH + 5 H(+)(in) = a quinol + NAD(+) + 4 H(+)(out). Functionally, NDH-1 shuttles electrons from NADH, via FMN and iron-sulfur (Fe-S) centers, to quinones in the respiratory chain. The immediate electron acceptor for the enzyme in this species is believed to be ubiquinone. Couples the redox reaction to proton translocation (for every two electrons transferred, four hydrogen ions are translocated across the cytoplasmic membrane), and thus conserves the redox energy in a proton gradient. This Paramagnetospirillum magneticum (strain ATCC 700264 / AMB-1) (Magnetospirillum magneticum) protein is NADH-quinone oxidoreductase subunit N.